The following is a 544-amino-acid chain: Chromosomal replication initiator protein DnaA (544 aa).

Positions 1–71 (MNDFWQHCSA…ADMARDFWHT (71 aa)) are domain I, interacts with DnaA modulators. The interval 71–207 (TPIDVQFVLD…GETDSMYERS (137 aa)) is domain II. The segment covering 90–105 (AAAPAPASARPASAPG) has biased composition (low complexity). Disordered stretches follow at residues 90–111 (AAAP…GGSA) and 180–203 (AAAR…TDSM). Residues 191–200 (SAGSNGNGET) show a composition bias toward polar residues. The interval 208–424 (KLNPVLTFDN…GALRKILAYS (217 aa)) is domain III, AAA+ region. 4 residues coordinate ATP: G252, G254, K255, and T256. Residues 425–544 (KFHGREITIE…LHVLEQTLKG (120 aa)) form a domain IV, binds dsDNA region.

The protein belongs to the DnaA family. In terms of assembly, oligomerizes as a right-handed, spiral filament on DNA at oriC.

Its subcellular location is the cytoplasm. Plays an essential role in the initiation and regulation of chromosomal replication. ATP-DnaA binds to the origin of replication (oriC) to initiate formation of the DNA replication initiation complex once per cell cycle. Binds the DnaA box (a 9 base pair repeat at the origin) and separates the double-stranded (ds)DNA. Forms a right-handed helical filament on oriC DNA; dsDNA binds to the exterior of the filament while single-stranded (ss)DNA is stabiized in the filament's interior. The ATP-DnaA-oriC complex binds and stabilizes one strand of the AT-rich DNA unwinding element (DUE), permitting loading of DNA polymerase. After initiation quickly degrades to an ADP-DnaA complex that is not apt for DNA replication. Binds acidic phospholipids. The polypeptide is Chromosomal replication initiator protein DnaA (Paraburkholderia xenovorans (strain LB400)).